A 402-amino-acid chain; its full sequence is Putative nickel insertion protein (402 aa).

It belongs to the LarC family.

The polypeptide is Putative nickel insertion protein (Synechococcus elongatus (strain ATCC 33912 / PCC 7942 / FACHB-805) (Anacystis nidulans R2)).